Here is a 378-residue protein sequence, read N- to C-terminus: Glutamate 5-kinase (378 aa).

Residue K14 participates in ATP binding. Residues S54, D141, and N153 each coordinate substrate. 173–174 (SD) is an ATP binding site. One can recognise a PUA domain in the interval 279 to 356 (AGRLTVDAGA…DEISEILGYD (78 aa)).

It belongs to the glutamate 5-kinase family.

The protein localises to the cytoplasm. It carries out the reaction L-glutamate + ATP = L-glutamyl 5-phosphate + ADP. Its pathway is amino-acid biosynthesis; L-proline biosynthesis; L-glutamate 5-semialdehyde from L-glutamate: step 1/2. Catalyzes the transfer of a phosphate group to glutamate to form L-glutamate 5-phosphate. This chain is Glutamate 5-kinase, found in Brucella anthropi (strain ATCC 49188 / DSM 6882 / CCUG 24695 / JCM 21032 / LMG 3331 / NBRC 15819 / NCTC 12168 / Alc 37) (Ochrobactrum anthropi).